We begin with the raw amino-acid sequence, 84 residues long: MSILSFLLGEKKKSASVAKERLQIILAHERTGHSAPADYLPALQRELVAVISKYVKIGDQDLRVSLERQDNLEVLEVKIEIPQH.

This sequence belongs to the MinE family.

Functionally, prevents the cell division inhibition by proteins MinC and MinD at internal division sites while permitting inhibition at polar sites. This ensures cell division at the proper site by restricting the formation of a division septum at the midpoint of the long axis of the cell. This is Cell division topological specificity factor from Cupriavidus taiwanensis (strain DSM 17343 / BCRC 17206 / CCUG 44338 / CIP 107171 / LMG 19424 / R1) (Ralstonia taiwanensis (strain LMG 19424)).